A 165-amino-acid polypeptide reads, in one-letter code: Glycine cleavage system H protein, mitochondrial (165 aa).

A Lipoyl-binding domain is found at 57–139; the sequence is NAIVGISSYA…YEKGWLFKVD (83 aa). Residue Lys-98 is modified to N6-lipoyllysine.

The protein belongs to the GcvH family. As to quaternary structure, the glycine cleavage system is composed of four proteins: P, T, L and H. It depends on (R)-lipoate as a cofactor.

The protein resides in the mitochondrion. In terms of biological role, the glycine cleavage system catalyzes the degradation of glycine. The H protein shuttles the methylamine group of glycine from the P protein to the T protein. The chain is Glycine cleavage system H protein, mitochondrial (ppl) from Drosophila melanogaster (Fruit fly).